Reading from the N-terminus, the 128-residue chain is Aspartate 1-decarboxylase (128 aa).

The Schiff-base intermediate with substrate; via pyruvic acid role is filled by serine 25. Serine 25 carries the post-translational modification Pyruvic acid (Ser). Threonine 57 contacts substrate. Catalysis depends on tyrosine 58, which acts as the Proton donor. 73–75 contacts substrate; that stretch reads GAA.

Belongs to the PanD family. In terms of assembly, heterooctamer of four alpha and four beta subunits. It depends on pyruvate as a cofactor. Is synthesized initially as an inactive proenzyme, which is activated by self-cleavage at a specific serine bond to produce a beta-subunit with a hydroxyl group at its C-terminus and an alpha-subunit with a pyruvoyl group at its N-terminus.

It is found in the cytoplasm. It carries out the reaction L-aspartate + H(+) = beta-alanine + CO2. It participates in cofactor biosynthesis; (R)-pantothenate biosynthesis; beta-alanine from L-aspartate: step 1/1. In terms of biological role, catalyzes the pyruvoyl-dependent decarboxylation of aspartate to produce beta-alanine. The protein is Aspartate 1-decarboxylase of Chlorobium luteolum (strain DSM 273 / BCRC 81028 / 2530) (Pelodictyon luteolum).